Here is a 447-residue protein sequence, read N- to C-terminus: Omega-6 fatty acid desaturase, chloroplastic (447 aa).

The transit peptide at 1–65 (MESAITISNH…TRRKSTLVQA (65 aa)) directs the protein to the chloroplast. Val-66 carries the post-translational modification N-acetylvaline. Residues 171–175 (HDCAH) carry the Histidine box-1 motif. The Histidine box-2 signature appears at 207 to 211 (HDQHH). Positions 367–371 (HIPHH) match the Histidine box-3 motif.

Belongs to the fatty acid desaturase type 1 family.

Its subcellular location is the plastid. It is found in the chloroplast membrane. It carries out the reaction a (9Z)-octadecenoyl-containing glycerolipid + 2 reduced [2Fe-2S]-[ferredoxin] + O2 + 2 H(+) = a (9Z,12Z)-octadecadienoyl-containing glycerolipid + 2 oxidized [2Fe-2S]-[ferredoxin] + 2 H2O. It functions in the pathway lipid metabolism; polyunsaturated fatty acid biosynthesis. Chloroplast omega-6 fatty acid desaturase introduces the second double bond in the biosynthesis of 16:3 and 18:3 fatty acids, important constituents of plant membranes. It is thought to use ferredoxin as an electron donor and to act on fatty acids esterified to galactolipids, sulfolipids and phosphatidylglycerol. This Spinacia oleracea (Spinach) protein is Omega-6 fatty acid desaturase, chloroplastic.